Reading from the N-terminus, the 174-residue chain is NADH-quinone oxidoreductase subunit B (174 aa).

Positions 51, 52, 116, and 146 each coordinate [4Fe-4S] cluster.

It belongs to the complex I 20 kDa subunit family. As to quaternary structure, NDH-1 is composed of 14 different subunits. Subunits NuoB, C, D, E, F, and G constitute the peripheral sector of the complex. The cofactor is [4Fe-4S] cluster.

It is found in the cell inner membrane. It catalyses the reaction a quinone + NADH + 5 H(+)(in) = a quinol + NAD(+) + 4 H(+)(out). Functionally, NDH-1 shuttles electrons from NADH, via FMN and iron-sulfur (Fe-S) centers, to quinones in the respiratory chain. The immediate electron acceptor for the enzyme in this species is believed to be ubiquinone. Couples the redox reaction to proton translocation (for every two electrons transferred, four hydrogen ions are translocated across the cytoplasmic membrane), and thus conserves the redox energy in a proton gradient. This is NADH-quinone oxidoreductase subunit B from Anaplasma phagocytophilum (strain HZ).